The sequence spans 458 residues: Monomethylamine methyltransferase MtmB2 (458 aa).

Position 202 (Pyl-202) is a non-standard amino acid, pyrrolysine.

This sequence belongs to the monomethylamine methyltransferase family. As to quaternary structure, can form a complex with MtmC.

The catalysed reaction is Co(I)-[methylamine-specific corrinoid protein] + methylamine + H(+) = methyl-Co(III)-[methylamine-specific corrinoid protein] + NH4(+). It functions in the pathway one-carbon metabolism; methanogenesis from methylamine. Catalyzes the transfer of the methyl group from monomethylamine to the corrinoid cofactor of MtmC. This Methanosarcina acetivorans (strain ATCC 35395 / DSM 2834 / JCM 12185 / C2A) protein is Monomethylamine methyltransferase MtmB2 (mtmB2).